Consider the following 496-residue polypeptide: MENIRVRFAPSPTGPLHIGGARSALFNFLLARRFGGQFIVRVEDTDLERSSRESEDNILDALEWLGITWDEGIRVGGPHAPYRQTERLHTYREAADKLLAEGKAYRCYCSEEELEAERQAFAEKGELPRYSGRCRSLSADDEARLRAEGRKPVIRFRVPDEGAVAIDDLVRGHVSFECAGIGDFIIVKSDGIPTYNFAVVIDDAQMAITHVIRGEEHLSNTPRQLLIYDALGLTPPKFAHVSLILGKDRSKMSKRHGSTSVVAYQRQGYLPEALVNFLVLLGWSPGGEEEIFSLDDLIAQFSLDRVAKSPAVFDFEKLNWINGVYLRKADLDRLVALAMPHLIEAGVVQEPLDEAAARKVRYMVQAIQEKVSYMAQIVDFIPLFFGDAITFESDEAKAVLTEEQVPKVLKACLRKLTEGRDLTPDNVKAMLKEVTKETKEKGRNVFMPIRVALTGQQHGPDLNALITALGREGAVNRIRRAAELAGVALGSSPFSC.

The 'HIGH' region motif lies at 10-20; it reads PSPTGPLHIGG. The short motif at 251–255 is the 'KMSKS' region element; the sequence is KMSKR. Position 254 (Lys254) interacts with ATP.

Belongs to the class-I aminoacyl-tRNA synthetase family. Glutamate--tRNA ligase type 1 subfamily. Monomer.

The protein resides in the cytoplasm. It carries out the reaction tRNA(Glu) + L-glutamate + ATP = L-glutamyl-tRNA(Glu) + AMP + diphosphate. Its function is as follows. Catalyzes the attachment of glutamate to tRNA(Glu) in a two-step reaction: glutamate is first activated by ATP to form Glu-AMP and then transferred to the acceptor end of tRNA(Glu). In Heliobacterium modesticaldum (strain ATCC 51547 / Ice1), this protein is Glutamate--tRNA ligase.